We begin with the raw amino-acid sequence, 498 residues long: Neoxanthin synthase, chloroplastic (498 aa).

Residues 1–33 constitute a chloroplast transit peptide; it reads METLLKPLTSLLLSSPTPHRSIFQQNPPSLNPT. The interval 16-38 is disordered; sequence PTPHRSIFQQNPPSLNPTTKKKS. A compositionally biased stretch (polar residues) spans 22–33; it reads IFQQNPPSLNPT. 84–112 contacts NAD(+); sequence VIIIGAGPAGLRLAEHVSKYGIKVCCVDP.

The protein belongs to the lycopene cyclase family.

The protein resides in the plastid. It localises to the chloroplast. It carries out the reaction all-trans-violaxanthin = all-trans-neoxanthin. It functions in the pathway carotenoid biosynthesis; neoxanthin biosynthesis. Functionally, involved in the synthesis of neoxanthin, the last product of carotenoid synthesis and a precursor of abscisic acid. This is Neoxanthin synthase, chloroplastic (NXS) from Solanum tuberosum (Potato).